The chain runs to 119 residues: MTVSNTVDQYTVLTGDRSKIKDLLCNRLTECGWRDEVRLLCRNILMEKAVAGAVTSNSNLTLEQLITEVTPKARTLVPDAVKKELLMKIRTILTENETEGTDNHDDDEDDEDENGTEDN.

Residues 93 to 119 (LTENETEGTDNHDDDEDDEDENGTEDN) form a disordered region. Positions 96 to 119 (NETEGTDNHDDDEDDEDENGTEDN) are enriched in acidic residues.

This sequence belongs to the ENY2 family. In terms of assembly, component of the nuclear pore complex (NPC)-associated AMEX complex (anchoring and mRNA export complex), composed of at least e(y)2 and xmas-2. Component of the SAGA transcription coactivator-HAT complexes, at least composed of Ada2b, e(y)2, Pcaf/Gcn5, Taf10 and Nipped-A/Trrap. Within the SAGA complex, e(y)2, Sgf11, and not/nonstop form an additional subcomplex of SAGA called the DUB module (deubiquitination module). Component of the THO complex, composed of at least e(y)2, HPR1, THO2, THOC5, THOC6 and THOC7. Interacts with e(y)1. Interacts with su(Hw) (via zinc fingers). Interacts with xmas-2; required for localization to the nuclear periphery. Interacts with the nuclear pore complex (NPC).

It localises to the nucleus. The protein localises to the nucleoplasm. It is found in the cytoplasm. Functionally, involved in mRNA export coupled transcription activation by association with both the AMEX and the SAGA complexes. The SAGA complex is a multiprotein complex that activates transcription by remodeling chromatin and mediating histone acetylation and deubiquitination. Within the SAGA complex, participates in a subcomplex that specifically deubiquitinates histone H2B. The SAGA complex is recruited to specific gene promoters by activators, where it is required for transcription. Required for nuclear receptor-mediated transactivation. Involved in transcription elongation by recruiting the THO complex onto nascent mRNA. The AMEX complex functions in docking export-competent ribonucleoprotein particles (mRNPs) to the nuclear entrance of the nuclear pore complex (nuclear basket). AMEX participates in mRNA export and accurate chromatin positioning in the nucleus by tethering genes to the nuclear periphery. In Drosophila willistoni (Fruit fly), this protein is Enhancer of yellow 2 transcription factor.